Here is a 28-residue protein sequence, read N- to C-terminus: Arylalkyl acylamidase (28 aa).

Homotetramer.

The catalysed reaction is an N-acetylarylalkylamine + H2O = an aralkylamine + acetate. With respect to regulation, activated by divalent metal ions. Inhibited by certain thiol reagents. Its function is as follows. Shows a strict specificity for N-acetyl arylalkylamines but not acetanilide derivatives. In Pseudomonas putida (Arthrobacter siderocapsulatus), this protein is Arylalkyl acylamidase.